The following is a 1662-amino-acid chain: MGEKSSQLKTLLKKNLLLKSKSKCGICCEIVFPIIIVLLVFAILVLVQLFKPNYDLIKTTQFSNRINENNIIIYGGKAGSLNVEQKGVIDMMKFQLSNELNKSISEVDVYFKEINDKSEMENYFQINSTQVFGGIWFESNQLSSVANTTNTNTTTNSFKYSIRLDSNSVLDSNKVKDNGIDSSDYLTKNWAYIQIAMDQAIFGYFGLDYKLVINGQRYPDPYVELWQKWINGRESVFKSAGSVFVSAALLIFTFRLVTELVVEKETKIREGMSIMGLNQYCYFISWIITSLVTALPIDLIIIVILKGSQVIHSTSWIIVIVTLILYLLTLQLLAFIFSMFFDKSKFAGLLTFLTILLINICGIFIGEYEIINIHIKLLLCCIFSPIGIACSFYIMSIRDIPDTISTINLNQVISEKQIIGTFVFNIIFYTFLIWYLDKIVKTEYGTKEPWYFLFTKRYWTVGAGKINKKNKNKEYNYNDIESTIQNNNNDNIEMVPIEVRNKTTISIRNLRKEFKTGDGLRIAVNDLNLDMFDGQIHGLLGPNGSGKSTTISMLTGLLSPTSGTAFILGNDITYQMNEIRKCTGVCLQTDIIWNQLTVLEHLEIYASLKGITNKKQIKSESLKMANEIDLGEKLHTPAGSLSGGQKRKLCLGIAFIGRSTIIFLDEVSSGMDPSSRRKVWDFLLSHKKGKTIILTTHYLDEADYLSDRISIISHGKLITDGSSLFLKNKYGVGYLLTCSKSLNTIDQFNVDQVTQFIRDQIPDVTVLSNAGSEISFRLPTASLPVFSKFFKDFDENLSNFHIDSYGISVTTLEEVFLKIGTDIDTDALSIADGNGNDDELKRSIGVSSTGIKSKQQLKALLIKRVKTSSKDFKAFLLSLLLPLLVIIGSIIVFKEVDNEVIFYNNSTEPLTFSLLQQYGKNDIVPIQLAGTTSEFDFNKFLSNSPYFNQFQYLNNSINFNQYLINNYKQSSGSINFTIPLSSSLINNTTKVISYNSLFNFNYIHSWPVHVNLINDALLRNHNGIGIECTSLPFDHILTSFQKASQGMNIQSIVYFIVIMMAGFSLMAGSFAGSISQERTNRIKRLLYISGCKKYIYWVSNLLWDYFFAFILLLITCIILAIVDDKFNDQFGLFFLSLVLFSLSIIPLSYLFSFKFSSFGKSTGAITAIHFSIGVIMTIAMIILRIEVIIKNSSSLENIADIIDIVFNILSPLYAFSRVIFIISGFPGSLRLGALKIDDYWSLHYASTPIIILSVHVVVWTIFILLIDYSPEFKGYLRNPKTILPPPPPIDEDSDVSAERIRLESMSPIPSTDQGSGGGGDMLQYKGLHKLFIGKGKNPNKNAVYNSTLGIPQGQTFGLLGLNGAGKTTTVSMLAGDILPTSGQITINGHDLVTDRAQALRGVSVCPQFDALITLLTAREQLSLYCAIKGVPDDKISLVVEAFIKMMDLGKIANSNTGGYSGGNKRKVSLSIAMLGNPSVVLIDEASSGCDPIIRYRQCQVISELGKNKVIILTSHSMSEIQALCSRMTIMRDGQFKCLGSTQHIKSKFGAGYSVEVKFKKSCLEVGIPQSLQCVLECFPNATILDQHDLMASLELPNPPENPIKVSEIFNILSTELSSILDDYSVSQTSLEQVFLKLTGATHEDRLNLNNQQQQQQTIPNSD.

7 helical membrane-spanning segments follow: residues 30–50 (IVFP…VQLF), 242–262 (SVFV…ELVV), 284–304 (ISWI…IIVI), 317–337 (IIVI…AFIF), 346–366 (FAGL…IFIG), 377–397 (LLLC…IMSI), and 417–437 (QIIG…WYLD). Positions 505–739 (ISIRNLRKEF…YGVGYLLTCS (235 aa)) constitute an ABC transporter 1 domain. Position 541-548 (541-548 (GPNGSGKS)) interacts with ATP. Helical transmembrane passes span 872-892 (FKAF…SIIV), 1052-1072 (IVYF…SFAG), 1102-1122 (LWDY…LAIV), 1130-1150 (FGLF…LSYL), 1163-1183 (GAIT…MIIL), 1201-1221 (IIDI…VIFI), and 1246-1266 (STPI…ILLI). The region spanning 1322-1557 (LQYKGLHKLF…FGAGYSVEVK (236 aa)) is the ABC transporter 2 domain. ATP is bound at residue 1360–1367 (GLNGAGKT).

The protein belongs to the ABC transporter superfamily. ABCA family.

The protein resides in the membrane. In Dictyostelium discoideum (Social amoeba), this protein is ABC transporter A family member 5 (abcA5).